Here is a 365-residue protein sequence, read N- to C-terminus: Protein RecA (365 aa).

77-84 (GPESSGKT) contributes to the ATP binding site.

This sequence belongs to the RecA family.

It is found in the cytoplasm. Functionally, can catalyze the hydrolysis of ATP in the presence of single-stranded DNA, the ATP-dependent uptake of single-stranded DNA by duplex DNA, and the ATP-dependent hybridization of homologous single-stranded DNAs. It interacts with LexA causing its activation and leading to its autocatalytic cleavage. This chain is Protein RecA, found in Mesorhizobium japonicum (strain LMG 29417 / CECT 9101 / MAFF 303099) (Mesorhizobium loti (strain MAFF 303099)).